Reading from the N-terminus, the 449-residue chain is UDP-N-acetylmuramate--L-alanine ligase (449 aa).

121–127 serves as a coordination point for ATP; the sequence is GAHGKSS.

It belongs to the MurCDEF family.

It localises to the cytoplasm. The enzyme catalyses UDP-N-acetyl-alpha-D-muramate + L-alanine + ATP = UDP-N-acetyl-alpha-D-muramoyl-L-alanine + ADP + phosphate + H(+). It functions in the pathway cell wall biogenesis; peptidoglycan biosynthesis. Cell wall formation. The sequence is that of UDP-N-acetylmuramate--L-alanine ligase from Helicobacter pylori (strain P12).